Consider the following 1050-residue polypeptide: MALYDEDLLKNPFYLALQKWRPDLCSKVAQIHGIVLVPCKGSLSSSIQSTCQFESYILIPVEEHFQTLNGKDVFIQGNRIKLGAGFTCLLSVPILFEETFYNEKEESFSILCIAHPLEKRESSEEPLAPSDPFSLKTIEDVREFLGRHSERFDRNIASFHRTFRECERKSLRHHIDSANALYTKCLQQLLRDSHLKMLAKQEAQMNLMKQAVEIYVHHEIYDLIFKYVGTMEASEDAAFNKITRSLQDLQQKDIGVKPEFSFNIPRAKRELAQLNKCTSPQQKLVCLRKVVQLITQSPSQRVNLETMCADDLLSVLLYLLVKTEIPNWMANLSYIKNFRFSSSAKDELGYCLTSFEAAIEYIRQGSLSAKPPESEGFGDRLFLKQRMSLLSQMTSSPTDCLFKHIASGNQKEVERLLSQEDHDKDAVQKMCHPLCFCDDCEKLVSGRLNDPSVVTPFSRDDRGHTPLHVAALCGQASLIDLLVSKGAVVNATDYHGATPLHLACQKGYQSVTLLLLHYKASAEVQDNNGNTPLHLACTYGHEDCVKALVYYDVESCRLDIGNEKGDTPLHIAARWGYQAIIETLLQNGASPEIQNRLKETPLKCALNSKILSVMEAYHLSFERRQKSSEAPVQSLQRSVDSISQESSTSSFSSMSAGSRQEETKKDYREVEKLLRAVADGDLEMVRYLLEWTEEDLEDAEDTVSAVDPEFCHPLCQCPKCAPAQKRLAKVPASGLGVNVTSQDGSSPLYVAALHGRADLIPLLLKHGANAGARNADQAVPLHLACQQGHFQVVKCLLDSNAKPNKKDLSGNTPLIYACSGGHHEVVALLLQHGAAINTSNNKGNTALHEAVIEKHVFVVELLLLHGASVQVLNKRQRTAVDCAEQNSKIMELLQVVPSCVASLDDVAETDRKEYVTVKIRKKWNSKLYDLPDEPFTRQFYFAHSAGQFKGKTSREIMARDRSVPNLTEGSLHEPGRQSVTLRQNNLPAQSGSHAAEKGNSDWPERPRVTQTGPGHRRMLRRHTVEDAVVSQGPEAAGPLSTPQEVSASRS.

Residues 1 to 372 (MALYDEDLLK…RQGSLSAKPP (372 aa)) are sufficient for GEF activity towards RAB21. Positions 233–371 (ASEDAAFNKI…IRQGSLSAKP (139 aa)) constitute a VPS9 domain. ANK repeat units follow at residues 396 to 426 (SPTD…DKDA), 462 to 491 (RGHT…VVNA), 495 to 524 (HGAT…SAEV), 528 to 560 (NGNT…RLDI), 564 to 593 (KGDT…SPEI), and 597 to 627 (LKET…RQKS). Residues 396–460 (SPTDCLFKHI…PSVVTPFSRD (65 aa)) form a sufficient for interaction with VPS29 region. The interval 451–600 (PSVVTPFSRD…PEIQNRLKET (150 aa)) is interaction with RAB38. The interaction with RAB32 stretch occupies residues 451 to 730 (PSVVTPFSRD…APAQKRLAKV (280 aa)). Residues 630–665 (APVQSLQRSVDSISQESSTSSFSSMSAGSRQEETKK) are disordered. Low complexity predominate over residues 638–658 (SVDSISQESSTSSFSSMSAGS). The required for interaction with VAMP7 stretch occupies residues 658–707 (SRQEETKKDYREVEKLLRAVADGDLEMVRYLLEWTEEDLEDAEDTVSAVD). ANK repeat units follow at residues 668–698 (REVE…DLED), 743–772 (DGSS…NAGA), 776–805 (DQAV…KPNK), 809–838 (SGNT…AINT), and 842–871 (KGNT…SVQV). Residues 692-746 (TEEDLEDAEDTVSAVDPEFCHPLCQCPKCAPAQKRLAKVPASGLGVNVTSQDGSS) form a sufficient for interaction with VPS29 region. Residues serine 962 and serine 970 each carry the phosphoserine modification. Residues 987-1050 (PAQSGSHAAE…TPQEVSASRS (64 aa)) form a disordered region. Positions 994–1007 (AAEKGNSDWPERPR) are enriched in basic and acidic residues. Threonine 1023 carries the phosphothreonine modification. Polar residues predominate over residues 1040–1050 (STPQEVSASRS).

In terms of assembly, interacts with RAB21 (GDP-bound form), VPS29, KIF5A, KIF5C, GOLGA4. Interacts with RAB32 (GTP-bound form), RAB38 (GTP-bound form), VAMP7. Interacts with low affinity with RAB5. ANKRD27:RAB32 heterodimers can homodimerize to form tetramers. Can interact with RAB38 or RAB32, VPS29 and VAMP7 simultaneously. A decreased interaction with RAB32 seen in the presence of SGSM2.

The protein localises to the early endosome. It localises to the late endosome. The protein resides in the cytoplasmic vesicle membrane. It is found in the lysosome. Its subcellular location is the cell membrane. The protein localises to the melanosome. May be a guanine exchange factor (GEF) for Rab21, Rab32 and Rab38 and regulate endosome dynamics. May regulate the participation of VAMP7 in membrane fusion events; in vitro inhibits VAMP7-mediated SNARE complex formation by trapping VAMP7 in a closed, fusogenically inactive conformation. Involved in peripheral melanosomal distribution of TYRP1 in melanocytes; the function, which probably is implicating vesicle-trafficking, includes cooperation with Rab32, Rab38 and VAMP7. Involved in the regulation of neurite growth; the function seems to require its GEF activity, probably towards Rab21, and VAMP7 but not Rab32/38. Proposed to be involved in Golgi sorting of VAMP7 and transport of VAMP7 vesicles to the cell surface; the function seems to implicate kinesin heavy chain isoform 5 proteins, GOLGA4, RAB21 and MACF1. Required for the colocalization of VAMP7 and Rab21, probably on TGN sites. Involved in GLUT1 endosome-to-plasma membrane trafficking; the function is dependent of association with VPS29. Regulates the proper trafficking of melanogenic enzymes TYR, TYRP1 and DCT/TYRP2 to melanosomes in melanocytes. This is Ankyrin repeat domain-containing protein 27 (ANKRD27) from Pongo abelii (Sumatran orangutan).